The chain runs to 202 residues: Methylthioribulose-1-phosphate dehydratase (202 aa).

2 residues coordinate Zn(2+): H93 and H95.

The protein belongs to the aldolase class II family. MtnB subfamily. Zn(2+) is required as a cofactor.

It carries out the reaction 5-(methylsulfanyl)-D-ribulose 1-phosphate = 5-methylsulfanyl-2,3-dioxopentyl phosphate + H2O. It functions in the pathway amino-acid biosynthesis; L-methionine biosynthesis via salvage pathway; L-methionine from S-methyl-5-thio-alpha-D-ribose 1-phosphate: step 2/6. Its function is as follows. Catalyzes the dehydration of methylthioribulose-1-phosphate (MTRu-1-P) into 2,3-diketo-5-methylthiopentyl-1-phosphate (DK-MTP-1-P). In Klebsiella pneumoniae (strain 342), this protein is Methylthioribulose-1-phosphate dehydratase.